Here is a 251-residue protein sequence, read N- to C-terminus: Tachykinins (251 aa).

The signal sequence occupies residues 1-21 (MGAPRTCLIFITIQLVSLAYA). Positions 22–25 (QEVS) are excised as a propeptide. Arginine 36 is subject to Arginine amide. Positions 39 to 50 (KYFDEEGIEQFY) are excised as a propeptide. Lysine 61 is modified (lysine amide). Positions 65 to 163 (SLQDILEAPE…MEPEQSNDLD (99 aa)) are excised as a propeptide. At arginine 176 the chain carries Arginine amide. Residues 180–183 (SINN) constitute a propeptide that is removed on maturation. Arginine 199 carries the arginine amide modification. Residues 203 to 223 (DLKNSNAHEIKFLVDQNGPLP) constitute a propeptide that is removed on maturation. Residue arginine 235 is modified to Arginine amide. Residues 239 to 251 (WTDEPSLEMDMPN) constitute a propeptide that is removed on maturation.

Belongs to the tachykinin family. In terms of tissue distribution, tachykinin-related peptide 1: Expressed in antennal lobe (AL) and gnathal ganglion (GNG) (at protein level). Expression in AL detected in all animals, in GNG in most animals (at protein level). Not expressed in corpora cardiaca (CC) and corpora allata (CA) (at protein level). Tachykinin-related peptide 2: Expressed in antennal lobe (AL) corpora cardiaca (CC) and corpora allata (CA) with expression detected in few animals (at protein level). Not expressed in gnathal ganglion (GNG) (at protein level). Tachykinin-related peptide 4: Expressed in corpora cardiaca (CC), corpora allata (CA), antennal lobe (AL) and gnathal ganglion (GNG) (at protein level). Expression in AL and GNG detected in most animals, in CC and CA detected in few animals (at protein level). Tachykinin-related peptide 5: Expressed in corpora cardiaca (CC), corpora allata (CA), antennal lobe (AL) and gnathal ganglion (GNG) (at protein level). Expression in CC and CA detected in some animals, in AL and GNG in few animals (at protein level). Tachykinin-related peptide 6: Expressed in antennal lobe (AL) and gnathal ganglion (GNG) (at protein level). Expression in AL detected in all animals, in GNG in some animals (at protein level). Not expressed in corpora cardiaca (CC) and corpora allata (CA) (at protein level).

Its subcellular location is the secreted. Tachykinins are active peptides which excite neurons, evoke behavioral responses, are potent vasodilators and secretagogues, and contract (directly or indirectly) many smooth muscles. The polypeptide is Tachykinins (Agrotis ipsilon (Black cutworm moth)).